A 390-amino-acid chain; its full sequence is GTPase Obg (390 aa).

An Obg domain is found at 1–159 (MKFVDEAAIL…RDILLELLLL (159 aa)). Residues 160–333 (ADVGMLGLPN…LCWDVMKFIN (174 aa)) enclose the OBG-type G domain. GTP contacts are provided by residues 166–173 (GLPNAGKS), 191–195 (FTTLV), 213–216 (DIPG), 283–286 (NKID), and 314–316 (SAV). Positions 173 and 193 each coordinate Mg(2+). Over residues 366-384 (AEADDDWDDDWDEEDDEGV) the composition is skewed to acidic residues. A disordered region spans residues 366–390 (AEADDDWDDDWDEEDDEGVEIIYQK).

It belongs to the TRAFAC class OBG-HflX-like GTPase superfamily. OBG GTPase family. In terms of assembly, monomer. Mg(2+) serves as cofactor.

Its subcellular location is the cytoplasm. Functionally, an essential GTPase which binds GTP, GDP and possibly (p)ppGpp with moderate affinity, with high nucleotide exchange rates and a fairly low GTP hydrolysis rate. Plays a role in control of the cell cycle, stress response, ribosome biogenesis and in those bacteria that undergo differentiation, in morphogenesis control. The protein is GTPase Obg of Serratia proteamaculans (strain 568).